Consider the following 230-residue polypeptide: Large ribosomal subunit protein uL1c (230 aa).

It belongs to the universal ribosomal protein uL1 family. Part of the 50S ribosomal subunit.

The protein localises to the plastid. It localises to the chloroplast. Binds directly to 23S rRNA. Might be involved in E site tRNA release (Potential). The sequence is that of Large ribosomal subunit protein uL1c (rpl1) from Phaeodactylum tricornutum (strain CCAP 1055/1).